A 59-amino-acid polypeptide reads, in one-letter code: Large ribosomal subunit protein uL30 (59 aa).

The protein belongs to the universal ribosomal protein uL30 family. Part of the 50S ribosomal subunit.

The protein is Large ribosomal subunit protein uL30 of Photobacterium profundum (strain SS9).